Consider the following 328-residue polypeptide: GTPase Obg (328 aa).

The 159-residue stretch at 2–160 folds into the Obg domain; sequence YNFKDSVNIT…LSVRLELFLV (159 aa). Residues 161 to 326 form the OBG-type G domain; the sequence is ADIGLVGLPN…LIKEFFILAK (166 aa). GTP-binding positions include 167 to 174, 192 to 196, 213 to 216, 280 to 283, and 307 to 309; these read GLPNAGKS, FTTKI, DIPG, NKLD, and SIY. The Mg(2+) site is built by Ser-174 and Thr-194.

Belongs to the TRAFAC class OBG-HflX-like GTPase superfamily. OBG GTPase family. As to quaternary structure, monomer. It depends on Mg(2+) as a cofactor.

The protein localises to the cytoplasm. In terms of biological role, an essential GTPase which binds GTP, GDP and possibly (p)ppGpp with moderate affinity, with high nucleotide exchange rates and a fairly low GTP hydrolysis rate. Plays a role in control of the cell cycle, stress response, ribosome biogenesis and in those bacteria that undergo differentiation, in morphogenesis control. This chain is GTPase Obg, found in Borreliella burgdorferi (strain ATCC 35210 / DSM 4680 / CIP 102532 / B31) (Borrelia burgdorferi).